A 400-amino-acid polypeptide reads, in one-letter code: Formate-dependent phosphoribosylglycinamide formyltransferase (400 aa).

N(1)-(5-phospho-beta-D-ribosyl)glycinamide is bound by residues 22-23 (EL) and Glu82. ATP-binding positions include Arg115, Lys156, 161-166 (SSGKGQ), 196-199 (EGFI), and Glu204. The ATP-grasp domain occupies 120 to 309 (RLAAETLGLP…EFALHARAIL (190 aa)). Positions 268 and 280 each coordinate Mg(2+). Residues Asp287, Lys361, and 368–369 (RR) contribute to the N(1)-(5-phospho-beta-D-ribosyl)glycinamide site.

The protein belongs to the PurK/PurT family. As to quaternary structure, homodimer.

It catalyses the reaction N(1)-(5-phospho-beta-D-ribosyl)glycinamide + formate + ATP = N(2)-formyl-N(1)-(5-phospho-beta-D-ribosyl)glycinamide + ADP + phosphate + H(+). The protein operates within purine metabolism; IMP biosynthesis via de novo pathway; N(2)-formyl-N(1)-(5-phospho-D-ribosyl)glycinamide from N(1)-(5-phospho-D-ribosyl)glycinamide (formate route): step 1/1. Functionally, involved in the de novo purine biosynthesis. Catalyzes the transfer of formate to 5-phospho-ribosyl-glycinamide (GAR), producing 5-phospho-ribosyl-N-formylglycinamide (FGAR). Formate is provided by PurU via hydrolysis of 10-formyl-tetrahydrofolate. This is Formate-dependent phosphoribosylglycinamide formyltransferase from Xanthomonas campestris pv. campestris (strain 8004).